A 204-amino-acid chain; its full sequence is Casparian strip membrane protein 2 (204 aa).

Residues 1–42 (MKNESTTIDVPAESSSAMKGKAPLIGVARDHTTSGSGGYNRG) are Cytoplasmic-facing. Residues 43-63 (LSIFDFLLRLAAIVAALAAAA) form a helical membrane-spanning segment. Over 64–92 (TMGTSDETLPFFTQFLQFEASYDDLPTFQ) the chain is Extracellular. The helical transmembrane segment at 93–113 (FFVIAMALVGGYLVLSLPISV) threads the bilayer. The Cytoplasmic segment spans residues 114–125 (VTILRPLATAPR). The chain crosses the membrane as a helical span at residues 126-146 (LLLLVLDTAVLALNTAAASSA). Residues 147–178 (AAISYLAHSGNQNTNWLPICQQFGDFCQKSSG) are Extracellular-facing. The helical transmembrane segment at 179–199 (AVVSAFISVVFFTILVVISGV) threads the bilayer. Over 200–204 (ALKRH) the chain is Cytoplasmic.

The protein belongs to the Casparian strip membrane proteins (CASP) family. In terms of assembly, homodimer and heterodimers.

The protein resides in the cell membrane. In terms of biological role, regulates membrane-cell wall junctions and localized cell wall deposition. Required for establishment of the Casparian strip membrane domain (CSD) and the subsequent formation of Casparian strips, a cell wall modification of the root endodermis that determines an apoplastic barrier between the intraorganismal apoplasm and the extraorganismal apoplasm and prevents lateral diffusion. In Arabidopsis lyrata subsp. lyrata (Lyre-leaved rock-cress), this protein is Casparian strip membrane protein 2.